We begin with the raw amino-acid sequence, 223 residues long: uncharacterized protein (223 aa).

The segment at 117-148 (THAHTHAHTHGHTHTRAHSTHAHTHAHSHYHT) is disordered.

This is an uncharacterized protein from Homo sapiens (Human).